An 82-amino-acid chain; its full sequence is Large ribosomal subunit protein bL27 (82 aa).

The tract at residues 1-54 (MAHKKGQGASRNGRDSESKRLGMKVGAGQRVSTGSILVRQRGTKWHPSQNVGRG) is disordered.

It belongs to the bacterial ribosomal protein bL27 family.

In Chlamydia caviae (strain ATCC VR-813 / DSM 19441 / 03DC25 / GPIC) (Chlamydophila caviae), this protein is Large ribosomal subunit protein bL27.